The primary structure comprises 281 residues: Lectin CaBo (281 aa).

The signal sequence occupies residues 1–29 (MAISKKSSLYLPIFTFITMLLMVVNKVSS). D119 serves as a coordination point for Ca(2+). R139 is an a carbohydrate binding site. The propeptide at 149–163 (IIKNSTTIDFNAAYN) is removed in mature form. E171 and D173 together coordinate Mn(2+). Ca(2+) is bound by residues D173, Y175, N177, and D182. A carbohydrate is bound at residue Y175. Residues D182 and H187 each coordinate Mn(2+). A carbohydrate is bound at residue 262 to 263 (LY).

The protein belongs to the leguminous lectin family. Equilibrium between homodimer and homotetramer. Post-translationally, the mature chain consists of residues 164-281 followed by residues 30-148. Concanavalin A-like lectins of the Diocleinae subtribe undergo proteolytic processing referred to as circular permutation. The propeptide is split into an N-terminal and a C-terminal part, the gamma and beta chain, respectively. These are then religated in beta-gamma order to form the mature alpha chain. The beta and gamma chains can often be detected in cell extracts.

Its function is as follows. D-mannose-specific lectin. This chain is Lectin CaBo, found in Canavalia bonariensis.